Consider the following 689-residue polypeptide: Glycine--tRNA ligase beta subunit (689 aa).

The protein belongs to the class-II aminoacyl-tRNA synthetase family. In terms of assembly, tetramer of two alpha and two beta subunits.

The protein localises to the cytoplasm. The catalysed reaction is tRNA(Gly) + glycine + ATP = glycyl-tRNA(Gly) + AMP + diphosphate. The protein is Glycine--tRNA ligase beta subunit of Acinetobacter baumannii (strain ATCC 17978 / DSM 105126 / CIP 53.77 / LMG 1025 / NCDC KC755 / 5377).